A 99-amino-acid chain; its full sequence is Malonate decarboxylase acyl carrier protein (99 aa).

Ser25 carries the post-translational modification O-(phosphoribosyl dephospho-coenzyme A)serine.

Belongs to the MdcC family. In terms of processing, covalently binds the prosthetic group of malonate decarboxylase.

It is found in the cytoplasm. In terms of biological role, subunit of malonate decarboxylase, it is an acyl carrier protein to which acetyl and malonyl thioester residues are bound via a 2'-(5''-phosphoribosyl)-3'-dephospho-CoA prosthetic group and turn over during the catalytic mechanism. The polypeptide is Malonate decarboxylase acyl carrier protein (Pseudomonas putida (strain W619)).